The following is a 606-amino-acid chain: Aspartate--tRNA(Asp/Asn) ligase (606 aa).

E177 serves as a coordination point for L-aspartate. Residues 201–204 are aspartate; the sequence is QLFK. L-aspartate is bound at residue R223. ATP is bound by residues 223-225 and Q232; that span reads RDE. Residue H461 participates in L-aspartate binding. E499 is an ATP binding site. L-aspartate is bound at residue R506. 551 to 554 provides a ligand contact to ATP; sequence GMDR.

It belongs to the class-II aminoacyl-tRNA synthetase family. Type 1 subfamily. As to quaternary structure, homodimer.

It is found in the cytoplasm. It carries out the reaction tRNA(Asx) + L-aspartate + ATP = L-aspartyl-tRNA(Asx) + AMP + diphosphate. Its function is as follows. Aspartyl-tRNA synthetase with relaxed tRNA specificity since it is able to aspartylate not only its cognate tRNA(Asp) but also tRNA(Asn). Reaction proceeds in two steps: L-aspartate is first activated by ATP to form Asp-AMP and then transferred to the acceptor end of tRNA(Asp/Asn). The polypeptide is Aspartate--tRNA(Asp/Asn) ligase (Prochlorococcus marinus (strain MIT 9303)).